The sequence spans 722 residues: Probable C-mannosyltransferase DPY19L4 (722 aa).

Positions 1–34 are disordered; it reads MAKEEGTSVEPRQRKKQRTSGSQEAKAEKIRRTP. An N-acetylalanine modification is found at alanine 2. Over residues 25 to 34 the composition is skewed to basic and acidic residues; that stretch reads AKAEKIRRTP. A run of 12 helical transmembrane segments spans residues 51–71, 160–177, 183–201, 246–262, 268–284, 291–307, 313–331, 351–369, 420–440, 465–485, 487–507, and 521–541; these read IVIG…YLSA, VYFY…YVTA, WLMS…WFLI, FCYL…MMVW, VLFL…IFSV, YEVY…GYLL, ALLV…LVKC, FYLL…KMFV, LLPF…QVFF, IIYH…MEGL, FIWT…PELW, and PMLL…LSLW.

This sequence belongs to the dpy-19 family.

The protein localises to the membrane. In terms of biological role, probable C-mannosyltransferase that mediates C-mannosylation of tryptophan residues on target proteins. This is Probable C-mannosyltransferase DPY19L4 (Dpy19l4) from Mus musculus (Mouse).